The chain runs to 86 residues: Large ribosomal subunit protein eL30 (86 aa).

It belongs to the eukaryotic ribosomal protein eL30 family.

The chain is Large ribosomal subunit protein eL30 (rpl30e) from Archaeoglobus fulgidus (strain ATCC 49558 / DSM 4304 / JCM 9628 / NBRC 100126 / VC-16).